Consider the following 254-residue polypeptide: 23S rRNA (guanosine-2'-O-)-methyltransferase RlmB (254 aa).

3 residues coordinate S-adenosyl-L-methionine: Gly-198, Ile-218, and Leu-227.

It belongs to the class IV-like SAM-binding methyltransferase superfamily. RNA methyltransferase TrmH family. RlmB subfamily. In terms of assembly, homodimer.

Its subcellular location is the cytoplasm. The catalysed reaction is guanosine(2251) in 23S rRNA + S-adenosyl-L-methionine = 2'-O-methylguanosine(2251) in 23S rRNA + S-adenosyl-L-homocysteine + H(+). Functionally, specifically methylates the ribose of guanosine 2251 in 23S rRNA. The sequence is that of 23S rRNA (guanosine-2'-O-)-methyltransferase RlmB from Blochmanniella floridana.